Reading from the N-terminus, the 388-residue chain is Muscleblind-like protein 1 (388 aa).

Thr6 is modified (phosphothreonine). 4 consecutive C3H1-type zinc fingers follow at residues 13–41, 47–73, 179–207, and 215–241; these read WLTL…HPSK, NGRV…HPPP, TDRL…HPAD, and DNTV…HPPA.

This sequence belongs to the muscleblind family. Interacts with DDX1 and YBX1. Interacts with HNRNPH1; the interaction in RNA-independent. Interacts with RBPMS; the interaction allows cooperative assembly of RNA-bound stable cell-specific alternative splicing regulatory complexes. In terms of tissue distribution, highly expressed in cardiac, skeletal muscle and during myoblast differentiation. Weakly expressed in other tissues (at protein level). Expressed in heart, brain, placenta, lung, liver, skeletal muscle, kidney and pancreas.

The protein localises to the nucleus. The protein resides in the cytoplasm. It is found in the cytoplasmic granule. Its function is as follows. Mediates pre-mRNA alternative splicing regulation. Acts either as activator or repressor of splicing on specific pre-mRNA targets. Inhibits cardiac troponin-T (TNNT2) pre-mRNA exon inclusion but induces insulin receptor (IR) pre-mRNA exon inclusion in muscle. Antagonizes the alternative splicing activity pattern of CELF proteins. Regulates the TNNT2 exon 5 skipping through competition with U2AF2. Inhibits the formation of the spliceosome A complex on intron 4 of TNNT2 pre-mRNA. Binds to the stem-loop structure within the polypyrimidine tract of TNNT2 intron 4 during spliceosome assembly. Binds to the 5'-YGCU(U/G)Y-3'consensus sequence. Binds to the IR RNA. Binds to expanded CUG repeat RNA, which folds into a hairpin structure containing GC base pairs and bulged, unpaired U residues. Together with RNA binding proteins RBPMS and RBFOX2, activates vascular smooth muscle cells alternative splicing events. Regulates NCOR2 alternative splicing. This chain is Muscleblind-like protein 1 (MBNL1), found in Homo sapiens (Human).